We begin with the raw amino-acid sequence, 301 residues long: Ribosomal RNA small subunit methyltransferase H (301 aa).

S-adenosyl-L-methionine-binding positions include 31–33, Asp-49, Phe-76, Asp-97, and Gln-104; that span reads GGY.

The protein belongs to the methyltransferase superfamily. RsmH family.

The protein localises to the cytoplasm. It carries out the reaction cytidine(1402) in 16S rRNA + S-adenosyl-L-methionine = N(4)-methylcytidine(1402) in 16S rRNA + S-adenosyl-L-homocysteine + H(+). In terms of biological role, specifically methylates the N4 position of cytidine in position 1402 (C1402) of 16S rRNA. The sequence is that of Ribosomal RNA small subunit methyltransferase H from Ehrlichia ruminantium (strain Gardel).